A 484-amino-acid chain; its full sequence is Allantoinase, mitochondrial (484 aa).

Zn(2+) contacts are provided by His-76, His-78, Lys-163, His-199, His-251, and Asp-324. Lys-163 is subject to N6-carboxylysine.

It belongs to the metallo-dependent hydrolases superfamily. Allantoinase family. Homotetramer. The cofactor is Zn(2+). In terms of processing, carboxylation allows a single lysine to coordinate two zinc ions. Liver and kidney.

It is found in the mitochondrion. The enzyme catalyses (S)-allantoin + H2O = allantoate + H(+). It functions in the pathway nitrogen metabolism; (S)-allantoin degradation; allantoate from (S)-allantoin: step 1/1. The polypeptide is Allantoinase, mitochondrial (ALN) (Aquarana catesbeiana (American bullfrog)).